Here is a 147-residue protein sequence, read N- to C-terminus: Protein archease (147 aa).

The Ca(2+) site is built by Asp17, Asp146, and Ile147.

This sequence belongs to the archease family.

In terms of biological role, activates the tRNA-splicing ligase complex by facilitating the enzymatic turnover of catalytic subunit RtcB. Acts by promoting the guanylylation of RtcB, a key intermediate step in tRNA ligation. Can also alter the NTP specificity of RtcB such that ATP, dGTP or ITP is used efficiently. This Pyrobaculum neutrophilum (strain DSM 2338 / JCM 9278 / NBRC 100436 / V24Sta) (Thermoproteus neutrophilus) protein is Protein archease.